The chain runs to 371 residues: Histidinol-phosphate aminotransferase (371 aa).

Lys-222 carries the post-translational modification N6-(pyridoxal phosphate)lysine.

This sequence belongs to the class-II pyridoxal-phosphate-dependent aminotransferase family. Histidinol-phosphate aminotransferase subfamily. Homodimer. The cofactor is pyridoxal 5'-phosphate.

The catalysed reaction is L-histidinol phosphate + 2-oxoglutarate = 3-(imidazol-4-yl)-2-oxopropyl phosphate + L-glutamate. It participates in amino-acid biosynthesis; L-histidine biosynthesis; L-histidine from 5-phospho-alpha-D-ribose 1-diphosphate: step 7/9. The sequence is that of Histidinol-phosphate aminotransferase from Anoxybacillus flavithermus (strain DSM 21510 / WK1).